Reading from the N-terminus, the 632-residue chain is 2-hydroxyacyl-CoA lyase 2 (632 aa).

The helical transmembrane segment at 13 to 33 (LFPSFLLLACGTLVAALLGAA) threads the bilayer. Glu-98 provides a ligand contact to thiamine diphosphate. The thiamine pyrophosphate binding stretch occupies residues 470 to 550 (DFVGTAAHLV…VMALVGNDAG (81 aa)). 2 residues coordinate Mg(2+): Asp-521 and Asn-547.

It belongs to the TPP enzyme family. Mg(2+) serves as cofactor. It depends on thiamine diphosphate as a cofactor. In terms of tissue distribution, expressed in all tissues tested, with highest expression in heart, pancreas and placenta.

Its subcellular location is the endoplasmic reticulum membrane. It carries out the reaction 2-hydroxyoctadecanoyl-CoA = heptadecanal + formyl-CoA. The enzyme catalyses (2R)-hydroxyhexadecanoyl-CoA = pentadecanal + formyl-CoA. Its function is as follows. Endoplasmic reticulum 2-OH acyl-CoA lyase involved in the cleavage (C1 removal) reaction in the fatty acid alpha-oxydation in a thiamine pyrophosphate (TPP)-dependent manner. Involved in the phytosphingosine degradation pathway. This chain is 2-hydroxyacyl-CoA lyase 2, found in Homo sapiens (Human).